The sequence spans 296 residues: Cytidine deaminase (296 aa).

CMP/dCMP-type deaminase domains are found at residues 48 to 168 and 187 to 296; these read DVDA…FGPV and QNVN…FIEE. 89 to 91 is a substrate binding site; that stretch reads NME. Histidine 102 serves as a coordination point for Zn(2+). Glutamate 104 acts as the Proton donor in catalysis. Residues cysteine 129 and cysteine 132 each contribute to the Zn(2+) site.

This sequence belongs to the cytidine and deoxycytidylate deaminase family. Homodimer. Zn(2+) is required as a cofactor.

The enzyme catalyses cytidine + H2O + H(+) = uridine + NH4(+). It carries out the reaction 2'-deoxycytidine + H2O + H(+) = 2'-deoxyuridine + NH4(+). In terms of biological role, this enzyme scavenges exogenous and endogenous cytidine and 2'-deoxycytidine for UMP synthesis. The sequence is that of Cytidine deaminase from Pectobacterium atrosepticum (strain SCRI 1043 / ATCC BAA-672) (Erwinia carotovora subsp. atroseptica).